We begin with the raw amino-acid sequence, 189 residues long: Peptidyl-tRNA hydrolase (189 aa).

TRNA is bound at residue Tyr-14. The active-site Proton acceptor is His-19. TRNA is bound by residues Phe-64, Asn-66, and Asn-112.

This sequence belongs to the PTH family. In terms of assembly, monomer.

Its subcellular location is the cytoplasm. The enzyme catalyses an N-acyl-L-alpha-aminoacyl-tRNA + H2O = an N-acyl-L-amino acid + a tRNA + H(+). Hydrolyzes ribosome-free peptidyl-tRNAs (with 1 or more amino acids incorporated), which drop off the ribosome during protein synthesis, or as a result of ribosome stalling. Functionally, catalyzes the release of premature peptidyl moieties from peptidyl-tRNA molecules trapped in stalled 50S ribosomal subunits, and thus maintains levels of free tRNAs and 50S ribosomes. The polypeptide is Peptidyl-tRNA hydrolase (Erythrobacter litoralis (strain HTCC2594)).